The following is a 365-amino-acid chain: Histidinol-phosphate aminotransferase (365 aa).

N6-(pyridoxal phosphate)lysine is present on K221.

Belongs to the class-II pyridoxal-phosphate-dependent aminotransferase family. Histidinol-phosphate aminotransferase subfamily. In terms of assembly, homodimer. The cofactor is pyridoxal 5'-phosphate.

It carries out the reaction L-histidinol phosphate + 2-oxoglutarate = 3-(imidazol-4-yl)-2-oxopropyl phosphate + L-glutamate. Its pathway is amino-acid biosynthesis; L-histidine biosynthesis; L-histidine from 5-phospho-alpha-D-ribose 1-diphosphate: step 7/9. This Rhodopseudomonas palustris (strain HaA2) protein is Histidinol-phosphate aminotransferase.